We begin with the raw amino-acid sequence, 166 residues long: PTS system glucose-specific EIIA component (166 aa).

The PTS EIIA type-1 domain maps to aspartate 34–asparagine 138. Zn(2+) contacts are provided by histidine 71 and histidine 86. Residue histidine 86 is the Tele-phosphohistidine intermediate; for EIIA activity of the active site. Histidine 86 bears the Phosphohistidine; by HPr mark.

As to quaternary structure, heterodimer with glycerol kinase (glpk). It depends on Zn(2+) as a cofactor.

Its subcellular location is the cytoplasm. Functionally, the phosphoenolpyruvate-dependent sugar phosphotransferase system (sugar PTS), a major carbohydrate active transport system, catalyzes the phosphorylation of incoming sugar substrates concomitantly with their translocation across the cell membrane. The enzyme II complex composed of PtsG and Crr is involved in glucose transport. This Staphylococcus epidermidis (strain ATCC 35984 / DSM 28319 / BCRC 17069 / CCUG 31568 / BM 3577 / RP62A) protein is PTS system glucose-specific EIIA component (crr).